We begin with the raw amino-acid sequence, 272 residues long: Cytosolic Fe-S cluster assembly factor NUBP2 (272 aa).

23–30 (GKGGVGKS) is an ATP binding site. [4Fe-4S] cluster-binding residues include C197 and C200.

Belongs to the Mrp/NBP35 ATP-binding proteins family. NUBP2/CFD1 subfamily. Heterotetramer of 2 NUBP1 and 2 NUBP2 chains. [4Fe-4S] cluster serves as cofactor.

The protein localises to the cytoplasm. Component of the cytosolic iron-sulfur (Fe/S) protein assembly (CIA) machinery. Required for maturation of extramitochondrial Fe-S proteins. The NUBP1-NUBP2 heterotetramer forms a Fe-S scaffold complex, mediating the de novo assembly of an Fe-S cluster and its transfer to target apoproteins. In Gallus gallus (Chicken), this protein is Cytosolic Fe-S cluster assembly factor NUBP2.